The following is a 385-amino-acid chain: Acetate kinase (385 aa).

Mg(2+) is bound at residue asparagine 9. Lysine 16 serves as a coordination point for ATP. Arginine 87 provides a ligand contact to substrate. The active-site Proton donor/acceptor is the aspartate 144. Residues 202–206 and 277–279 each bind ATP; these read HLGSG and DMR. Glutamate 373 provides a ligand contact to Mg(2+).

It belongs to the acetokinase family. In terms of assembly, homodimer. The cofactor is Mg(2+). Mn(2+) is required as a cofactor.

It is found in the cytoplasm. The enzyme catalyses acetate + ATP = acetyl phosphate + ADP. It functions in the pathway metabolic intermediate biosynthesis; acetyl-CoA biosynthesis; acetyl-CoA from acetate: step 1/2. Its function is as follows. Catalyzes the formation of acetyl phosphate from acetate and ATP. Can also catalyze the reverse reaction. The polypeptide is Acetate kinase (Rickettsia felis (strain ATCC VR-1525 / URRWXCal2) (Rickettsia azadi)).